Consider the following 143-residue polypeptide: Transcriptional regulator MraZ (143 aa).

2 consecutive SpoVT-AbrB domains span residues 5 to 47 and 76 to 119; these read THSP…PIRE and ASNE…DAQT.

Belongs to the MraZ family. As to quaternary structure, forms oligomers.

The protein localises to the cytoplasm. The protein resides in the nucleoid. This Thermobifida fusca (strain YX) protein is Transcriptional regulator MraZ.